The sequence spans 93 residues: Neutrophil cationic peptide 2 (93 aa).

The first 19 residues, 1–19, serve as a signal peptide directing secretion; the sequence is MRTVPLFAACLLLTLMAQA. A propeptide spanning residues 20 to 62 is cleaved from the precursor; it reads EPLPRAADHSDTKMKGDREDHVAVISFWEEESTSLQDAGAGAG. Disulfide bonds link Cys65–Cys93, Cys67–Cys82, and Cys72–Cys92.

This sequence belongs to the alpha-defensin family.

The protein localises to the secreted. In terms of biological role, has antibiotic, anti-fungi and antiviral activity. This Cavia porcellus (Guinea pig) protein is Neutrophil cationic peptide 2.